We begin with the raw amino-acid sequence, 75 residues long: DNA-directed RNA polymerase subunit omega (75 aa).

Belongs to the RNA polymerase subunit omega family. In terms of assembly, in cyanobacteria the RNAP catalytic core is composed of 2 alpha, 1 beta, 1 beta', 1 gamma and 1 omega subunit. When a sigma factor is associated with the core the holoenzyme is formed, which can initiate transcription.

It carries out the reaction RNA(n) + a ribonucleoside 5'-triphosphate = RNA(n+1) + diphosphate. Its function is as follows. Promotes RNA polymerase assembly. Latches the N- and C-terminal regions of the beta' subunit thereby facilitating its interaction with the beta and alpha subunits. This is DNA-directed RNA polymerase subunit omega from Synechococcus sp. (strain WH7803).